The following is a 275-amino-acid chain: Light-independent protochlorophyllide reductase iron-sulfur ATP-binding protein (275 aa).

ATP-binding positions include 12–17 (GIGKST) and K41. Residue S16 coordinates Mg(2+). Positions 97 and 131 each coordinate [4Fe-4S] cluster. 182-183 (NR) provides a ligand contact to ATP.

It belongs to the NifH/BchL/ChlL family. Homodimer. Protochlorophyllide reductase is composed of three subunits; BchL, BchN and BchB. [4Fe-4S] cluster is required as a cofactor.

The catalysed reaction is chlorophyllide a + oxidized 2[4Fe-4S]-[ferredoxin] + 2 ADP + 2 phosphate = protochlorophyllide a + reduced 2[4Fe-4S]-[ferredoxin] + 2 ATP + 2 H2O. The protein operates within porphyrin-containing compound metabolism; bacteriochlorophyll biosynthesis (light-independent). Functionally, component of the dark-operative protochlorophyllide reductase (DPOR) that uses Mg-ATP and reduced ferredoxin to reduce ring D of protochlorophyllide (Pchlide) to form chlorophyllide a (Chlide). This reaction is light-independent. The L component serves as a unique electron donor to the NB-component of the complex, and binds Mg-ATP. The chain is Light-independent protochlorophyllide reductase iron-sulfur ATP-binding protein from Chlorobium phaeovibrioides (strain DSM 265 / 1930) (Prosthecochloris vibrioformis (strain DSM 265)).